The sequence spans 185 residues: Ribosome-recycling factor (185 aa).

This sequence belongs to the RRF family.

Its subcellular location is the cytoplasm. In terms of biological role, responsible for the release of ribosomes from messenger RNA at the termination of protein biosynthesis. May increase the efficiency of translation by recycling ribosomes from one round of translation to another. This Erwinia tasmaniensis (strain DSM 17950 / CFBP 7177 / CIP 109463 / NCPPB 4357 / Et1/99) protein is Ribosome-recycling factor.